The primary structure comprises 392 residues: Alkaline phosphatase L (392 aa).

Positions 1–23 are cleaved as a signal peptide; sequence MYKRSLIAASLSVAALVSAQAMA.

The protein belongs to the PstS family. Homodimer.

It localises to the secreted. Its subcellular location is the periplasm. It carries out the reaction a phosphate monoester + H2O = an alcohol + phosphate. Has both a phosphomonoesterase and phosphodiesterase activity. The sequence is that of Alkaline phosphatase L from Pseudomonas aeruginosa.